The sequence spans 328 residues: MYVPGIAENLCLDIFHKQKQVISQYFASFHYDCVHQLTEKLLCHQGSLFFSGIGKSGCIARKLVATMQSFGEKAFFLSGDLLHGDLGVVSPGDIVCLFSNSGETREILEWIPHLKNRPVFLVGITAAPCSSLAAFSDFVIVLPKLEELDPFNLMPTTSTTCQLLFSDLLAMTLLRCRKISLSDYGSNHPSGQIGLKANGKVKDYLYPRTEVPFCSPLTTVAESLPTLSSYGYGCVCVVNELFELLGIFTDGDLRRGLSEYGGDILAYPLQQIMTRNPKVISEDSDVLLSLEMMESGNPVTVLPVVDAQQQRFIVGLLHMHALARAGLL.

The SIS domain occupies 37 to 179 (LTEKLLCHQG…AMTLLRCRKI (143 aa)). 52-57 (GIGKSG) is an ATP binding site. CBS domains are found at residues 207–264 (PRTE…GGDI) and 273–328 (MTRN…AGLL).

Belongs to the SIS family. GutQ/KpsF subfamily.

This is an uncharacterized protein from Chlamydia trachomatis serovar D (strain ATCC VR-885 / DSM 19411 / UW-3/Cx).